Consider the following 361-residue polypeptide: Phospho-N-acetylmuramoyl-pentapeptide-transferase (361 aa).

10 consecutive transmembrane segments (helical) span residues 28 to 48, 74 to 94, 99 to 119, 135 to 155, 167 to 187, 203 to 223, 236 to 256, 263 to 283, 288 to 308, and 338 to 358; these read LAVL…IKFL, TMGG…LADL, IWIT…DDYA, LLLQ…TIDS, SLSM…IVGA, VPIA…GNLI, TGEL…FLWF, VFMG…ISVI, IVLG…IMQV, and KVVI…LSSL.

Belongs to the glycosyltransferase 4 family. MraY subfamily. Mg(2+) serves as cofactor.

It is found in the cell inner membrane. It carries out the reaction UDP-N-acetyl-alpha-D-muramoyl-L-alanyl-gamma-D-glutamyl-meso-2,6-diaminopimeloyl-D-alanyl-D-alanine + di-trans,octa-cis-undecaprenyl phosphate = di-trans,octa-cis-undecaprenyl diphospho-N-acetyl-alpha-D-muramoyl-L-alanyl-D-glutamyl-meso-2,6-diaminopimeloyl-D-alanyl-D-alanine + UMP. The protein operates within cell wall biogenesis; peptidoglycan biosynthesis. Functionally, catalyzes the initial step of the lipid cycle reactions in the biosynthesis of the cell wall peptidoglycan: transfers peptidoglycan precursor phospho-MurNAc-pentapeptide from UDP-MurNAc-pentapeptide onto the lipid carrier undecaprenyl phosphate, yielding undecaprenyl-pyrophosphoryl-MurNAc-pentapeptide, known as lipid I. This chain is Phospho-N-acetylmuramoyl-pentapeptide-transferase, found in Rickettsia bellii (strain RML369-C).